The sequence spans 236 residues: 15,16-dihydrobiliverdin:ferredoxin oxidoreductase (236 aa).

This sequence belongs to the HY2 family.

The catalysed reaction is 15,16-dihydrobiliverdin + oxidized 2[4Fe-4S]-[ferredoxin] = biliverdin IXalpha + reduced 2[4Fe-4S]-[ferredoxin] + 2 H(+). In terms of biological role, catalyzes the two-electron reduction of biliverdin IX-alpha at the C15 methine bridge. In Synechococcus sp. (strain WH8020), this protein is 15,16-dihydrobiliverdin:ferredoxin oxidoreductase (pebA).